The sequence spans 180 residues: Cytidylate kinase (180 aa).

7 to 15 lines the ATP pocket; it reads GPPGSGKST.

This sequence belongs to the cytidylate kinase family. Type 2 subfamily.

It localises to the cytoplasm. The enzyme catalyses CMP + ATP = CDP + ADP. It catalyses the reaction dCMP + ATP = dCDP + ADP. The chain is Cytidylate kinase from Sulfurisphaera tokodaii (strain DSM 16993 / JCM 10545 / NBRC 100140 / 7) (Sulfolobus tokodaii).